A 160-amino-acid chain; its full sequence is Cytochrome b6-f complex subunit 4 (160 aa).

3 helical membrane passes run 36-56 (LLYV…GLAI), 95-115 (LLGV…PFIE), and 131-151 (TIFL…TMPI).

It belongs to the cytochrome b family. PetD subfamily. In terms of assembly, the 4 large subunits of the cytochrome b6-f complex are cytochrome b6, subunit IV (17 kDa polypeptide, petD), cytochrome f and the Rieske protein, while the 4 small subunits are petG, petL, petM and petN. The complex functions as a dimer.

The protein localises to the plastid. It localises to the chloroplast thylakoid membrane. Component of the cytochrome b6-f complex, which mediates electron transfer between photosystem II (PSII) and photosystem I (PSI), cyclic electron flow around PSI, and state transitions. The polypeptide is Cytochrome b6-f complex subunit 4 (Porphyra purpurea (Red seaweed)).